Here is a 393-residue protein sequence, read N- to C-terminus: Formate-dependent phosphoribosylglycinamide formyltransferase (393 aa).

N(1)-(5-phospho-beta-D-ribosyl)glycinamide is bound by residues 22–23 and E82; that span reads EL. ATP is bound by residues R114, K155, 160–165, 195–198, and E203; these read SSGKGQ and ESFV. In terms of domain architecture, ATP-grasp spans 119 to 308; it reads RLAAEELGLR…EFALHVRAVL (190 aa). Residues E267 and E279 each contribute to the Mg(2+) site. N(1)-(5-phospho-beta-D-ribosyl)glycinamide is bound by residues D286, K356, and 363–364; that span reads RR.

It belongs to the PurK/PurT family. In terms of assembly, homodimer.

It catalyses the reaction N(1)-(5-phospho-beta-D-ribosyl)glycinamide + formate + ATP = N(2)-formyl-N(1)-(5-phospho-beta-D-ribosyl)glycinamide + ADP + phosphate + H(+). The protein operates within purine metabolism; IMP biosynthesis via de novo pathway; N(2)-formyl-N(1)-(5-phospho-D-ribosyl)glycinamide from N(1)-(5-phospho-D-ribosyl)glycinamide (formate route): step 1/1. In terms of biological role, involved in the de novo purine biosynthesis. Catalyzes the transfer of formate to 5-phospho-ribosyl-glycinamide (GAR), producing 5-phospho-ribosyl-N-formylglycinamide (FGAR). Formate is provided by PurU via hydrolysis of 10-formyl-tetrahydrofolate. This Oleidesulfovibrio alaskensis (strain ATCC BAA-1058 / DSM 17464 / G20) (Desulfovibrio alaskensis) protein is Formate-dependent phosphoribosylglycinamide formyltransferase.